The following is a 116-amino-acid chain: L-amino-acid oxidase BjussuLAAO-II (116 aa).

Position 42–45 (42–45 (GPMR)) interacts with FAD. Positions 45 and 78 each coordinate substrate.

This sequence belongs to the flavin monoamine oxidase family. FIG1 subfamily. Homodimer; non-covalently linked. Requires FAD as cofactor. In terms of processing, glycosylated. In terms of tissue distribution, expressed by the venom gland.

It localises to the secreted. The catalysed reaction is an L-alpha-amino acid + O2 + H2O = a 2-oxocarboxylate + H2O2 + NH4(+). It carries out the reaction L-leucine + O2 + H2O = 4-methyl-2-oxopentanoate + H2O2 + NH4(+). The enzyme catalyses L-phenylalanine + O2 + H2O = 3-phenylpyruvate + H2O2 + NH4(+). It catalyses the reaction L-methionine + O2 + H2O = 4-methylsulfanyl-2-oxobutanoate + H2O2 + NH4(+). The catalysed reaction is L-isoleucine + O2 + H2O = (S)-3-methyl-2-oxopentanoate + H2O2 + NH4(+). It carries out the reaction L-histidine + O2 + H2O = 3-(imidazol-5-yl)pyruvate + H2O2 + NH4(+). The enzyme catalyses L-tyrosine + O2 + H2O = 3-(4-hydroxyphenyl)pyruvate + H2O2 + NH4(+). It catalyses the reaction L-tryptophan + O2 + H2O = indole-3-pyruvate + H2O2 + NH4(+). With respect to regulation, its enzymatic activities is reduced by the presence of Zn(2+), Al(3+), Cu(2+), Na(+) or Ni(2+) salts. Catalyzes an oxidative deamination of predominantly hydrophobic and aromatic L-amino acids, thus producing hydrogen peroxide that may contribute to the diverse toxic effects of this enzyme. Shows very high enzymatic activity on L-Met and L-Leu, high activity on L-Ile, L-Phe and L-Tyr and moderate activity on L-His. Exhibits diverse biological activities, such as hemorrhage, hemolysis, edema, apoptosis of vascular endothelial cells or tumor cell lines, and antibacterial, as well as regulation of platelet aggregation. Effects of snake L-amino oxidases on platelets are controversial, since they either induce aggregation or inhibit agonist-induced aggregation. These different effects are probably due to different experimental conditions. In vitro, has a strong antiprotozoal effect against Leishmania amazonensis (IC(50)=4.56 ug/mL) and Trypanosoma cruzi (IC(50)=4.85 ug/mL). It also causes cell death and DNA damage in hepatocarcinoma cells (HepG2) in vitro by inducing oxidative stress. It exerts cytotoxicity towards colorectal adenocarcinomahuman cells (Caco-2) by acting on multiple intracellular targets. It diminishes cell viability by decreasing mitochondrial activity, the activity of acid phosphatases, and lysosomal function. In addition, it increases intracellular levels of reactive oxygen species and DNA damage, it elevates the expression of the pro-inflammatory cytokine genes TNF and IL6, and lowers the expression of the apoptotic-related genes. Also induces cytotoxicity (IC(50)=1.80 ug/mL) and apoptosis in MCF-7 cells (a human breast adeno-carcinoma cell line) by activating the intrinsic and extrinsic apoptosis pathways, but are not cytotoxic towards MCF-10A cells (a non-tumorigenic human breast epithelial cell line). This chain is L-amino-acid oxidase BjussuLAAO-II, found in Bothrops jararacussu (Jararacussu).